The primary structure comprises 188 residues: Elongation factor P-like protein (188 aa).

This sequence belongs to the elongation factor P family.

This chain is Elongation factor P-like protein, found in Xylella fastidiosa (strain M12).